A 328-amino-acid polypeptide reads, in one-letter code: Sphingolipid delta(4)-desaturase DES1-like (328 aa).

Helical transmembrane passes span Pro-50 to Leu-70, Ile-78 to His-98, and Trp-114 to Tyr-134. The Histidine box-1 motif lies at His-98–His-102. A Histidine box-2 motif is present at residues His-135–His-139. Helical transmembrane passes span Leu-164 to Leu-184, Trp-192 to Gly-212, and Ala-217 to Ile-237. The Histidine box-3 signature appears at His-266–His-270.

This sequence belongs to the fatty acid desaturase type 1 family. DEGS subfamily.

The protein localises to the endoplasmic reticulum membrane. The enzyme catalyses an N-acylsphinganine + 2 Fe(II)-[cytochrome b5] + O2 + 2 H(+) = an N-acylsphing-4-enine + 2 Fe(III)-[cytochrome b5] + 2 H2O. In terms of biological role, sphingolipid-delta-4-desaturase required for the biosynthesis of delta-4-unsaturated sphingolipids and derivatives. The protein is Sphingolipid delta(4)-desaturase DES1-like of Oryza sativa subsp. japonica (Rice).